Reading from the N-terminus, the 170-residue chain is VIP peptides (170 aa).

The N-terminal stretch at 1–20 is a signal peptide; sequence MDTRNKAQLLVLLTLLSVLF. Residues 21–79 constitute a propeptide that is removed on maturation; sequence SQTSAWPLYRAPSALRLGDRIPFEGANEPDQVSLKEDIDMLQNALAENDTPYYDVSRNA. Phosphoserine is present on serine 76. Methionine 107 carries the post-translational modification Methionine amide. Asparagine 152 carries the asparagine amide modification. Residues 156 to 170 constitute a propeptide that is removed on maturation; the sequence is SSEGESPDFPEELEK.

The protein belongs to the glucagon family.

The protein resides in the secreted. VIP is a neuropeptide involved in a diverse array of physiological processes through activating the PACAP subfamily of class B1 G protein-coupled receptors: VIP receptor 1 (VPR1) and VIP receptor 2 (VPR2). Abundantly expressed throughout the CNS and peripheral nervous systems where they primarily exert neuroprotective and immune modulatory roles. Also causes vasodilation, lowers arterial blood pressure, stimulates myocardial contractility, increases glycogenolysis and relaxes the smooth muscle of trachea, stomach and gall bladder. Functionally, PHM-27 and PHV-42 are two bioactive forms from proteolysis of the same precursor protein, that cause vasodilation. PHM-27 is a potent agonist of the calcitonin receptor CALCR, with similar efficacy as calcitonin. This is VIP peptides from Homo sapiens (Human).